The sequence spans 141 residues: Large ribosomal subunit protein uL16 (141 aa).

The protein belongs to the universal ribosomal protein uL16 family. In terms of assembly, part of the 50S ribosomal subunit.

Binds 23S rRNA and is also seen to make contacts with the A and possibly P site tRNAs. This Campylobacter hominis (strain ATCC BAA-381 / DSM 21671 / CCUG 45161 / LMG 19568 / NCTC 13146 / CH001A) protein is Large ribosomal subunit protein uL16.